A 203-amino-acid chain; its full sequence is uncharacterized protein (203 aa).

The first 31 residues, Met-1 to Ala-31, serve as a signal peptide directing secretion.

This is an uncharacterized protein from Bacillus subtilis (strain 168).